Here is an 804-residue protein sequence, read N- to C-terminus: Type 2 DNA topoisomerase 6 subunit B (804 aa).

ATP-binding positions include Asn58, Asp89, 110 to 111, 120 to 127, and Lys629; these read SR and GQQGIGIS.

Belongs to the TOP6B family. Homodimer. Heterotetramer of two Top6A and two Top6B chains.

It catalyses the reaction ATP-dependent breakage, passage and rejoining of double-stranded DNA.. Relaxes both positive and negative superturns and exhibits a strong decatenase activity. The sequence is that of Type 2 DNA topoisomerase 6 subunit B from Halobacterium salinarum (strain ATCC 29341 / DSM 671 / R1).